We begin with the raw amino-acid sequence, 71 residues long: Translation initiation factor IF-1 (71 aa).

Positions 1–71 constitute an S1-like domain; that stretch reads MSKDDLIQFT…LTKGRVIHRH (71 aa).

It belongs to the IF-1 family. As to quaternary structure, component of the 30S ribosomal translation pre-initiation complex which assembles on the 30S ribosome in the order IF-2 and IF-3, IF-1 and N-formylmethionyl-tRNA(fMet); mRNA recruitment can occur at any time during PIC assembly.

Its subcellular location is the cytoplasm. In terms of biological role, one of the essential components for the initiation of protein synthesis. Stabilizes the binding of IF-2 and IF-3 on the 30S subunit to which N-formylmethionyl-tRNA(fMet) subsequently binds. Helps modulate mRNA selection, yielding the 30S pre-initiation complex (PIC). Upon addition of the 50S ribosomal subunit IF-1, IF-2 and IF-3 are released leaving the mature 70S translation initiation complex. The protein is Translation initiation factor IF-1 of Rickettsia prowazekii (strain Madrid E).